We begin with the raw amino-acid sequence, 234 residues long: Orotidine 5'-phosphate decarboxylase (234 aa).

Substrate is bound by residues Asp-10, Lys-31, 58–67 (DLKLHDIPNT), Thr-121, Arg-183, Gln-192, Gly-212, and Arg-213. The active-site Proton donor is Lys-60.

The protein belongs to the OMP decarboxylase family. Type 1 subfamily. Homodimer.

It carries out the reaction orotidine 5'-phosphate + H(+) = UMP + CO2. It functions in the pathway pyrimidine metabolism; UMP biosynthesis via de novo pathway; UMP from orotate: step 2/2. In terms of biological role, catalyzes the decarboxylation of orotidine 5'-monophosphate (OMP) to uridine 5'-monophosphate (UMP). This chain is Orotidine 5'-phosphate decarboxylase, found in Halalkalibacterium halodurans (strain ATCC BAA-125 / DSM 18197 / FERM 7344 / JCM 9153 / C-125) (Bacillus halodurans).